Reading from the N-terminus, the 126-residue chain is Fatty acid-binding protein 10-A, liver basic (126 aa).

K57, K77, H99, and Q101 together coordinate cholate.

Belongs to the calycin superfamily. Fatty-acid binding protein (FABP) family. In terms of tissue distribution, expressed in the developing embryonic liver from 48 hpf. Also expressed in the liver of 5-day-old larvae. In adults, primarily expressed in the liver, with weak expression in the testis and intestine.

The protein localises to the cytoplasm. Functionally, binds hydrophobic ligands, such as cholate, in the cytoplasm. May be involved in intracellular lipid transport. Binds one cholate per subunit. The chain is Fatty acid-binding protein 10-A, liver basic (fabp10a) from Danio rerio (Zebrafish).